A 283-amino-acid polypeptide reads, in one-letter code: Eukaryotic translation initiation factor 3 subunit K (283 aa).

Residues 52–263 form the PCI domain; the sequence is YDLLANLAIL…EIKATVIREE (212 aa). The segment at 114–135 is disordered; the sequence is EATTTDADNAGSLSGDDDDDEV.

This sequence belongs to the eIF-3 subunit K family. Component of the eukaryotic translation initiation factor 3 (eIF-3) complex.

It is found in the cytoplasm. Its function is as follows. Component of the eukaryotic translation initiation factor 3 (eIF-3) complex, which is involved in protein synthesis of a specialized repertoire of mRNAs and, together with other initiation factors, stimulates binding of mRNA and methionyl-tRNAi to the 40S ribosome. The eIF-3 complex specifically targets and initiates translation of a subset of mRNAs involved in cell proliferation. The polypeptide is Eukaryotic translation initiation factor 3 subunit K (Mycosarcoma maydis (Corn smut fungus)).